We begin with the raw amino-acid sequence, 632 residues long: MSYFAGEFDVAVIGAGHAGCEAALASARLGVSTVVFATDLASVAMMPCNPNIGGTAKGHLVREIDALGGEMGINIDHTYIQSRMLNTSKGPAVHSLRAQADKRKYAERMKHVLETTDNLHLKQAEIIKVDIEDSKVKGVLTKNGAYYKVKAAILCTGVYLKSRIIIGDINYEGGPSGLAPANMLSQSLIESGIKITRFKTGTPARINRRTVDFSKMIEQKGDENIVPFSFMSENIEREQISCYLTYSGDETKKVVLENIDRSPLYNGSIKSVGPRYCPSFEDKIMRFPEKDKHQIFIEPEGENTEEMYVGGMSSSLPEDVQLKMLRSVPGLENAEMMRTAYAIEYDCIDPTQLELSLEFKDIDGLFSAGQMNGSSGYEEAGCQGLIAGINAALKLQGKEPLILKRSDAYIGVLIDDLVTKGTQEPYRMMTSRAEYRLLLRQDNADLRLTEMGHKIGLVKEDRYERFTKRKTAIEDEIERLKNIQITNKQEVNKFLEGLNSAGLKKPISLYELIKRPELNYFVVKDLDKDRAELPRDVQEQVNIISKYEGYIQKQLEQVEQFKKLENRLIPKEFDYKLVKGLRTEAIQKLDKIKPVNIGQASRISGVSPADISVLLIVLEQYNRNKGHKEEEF.

FAD is bound at residue G14–G19. G273–F287 is a binding site for NAD(+).

The protein belongs to the MnmG family. As to quaternary structure, homodimer. Heterotetramer of two MnmE and two MnmG subunits. The cofactor is FAD.

It is found in the cytoplasm. NAD-binding protein involved in the addition of a carboxymethylaminomethyl (cmnm) group at the wobble position (U34) of certain tRNAs, forming tRNA-cmnm(5)s(2)U34. This Clostridium novyi (strain NT) protein is tRNA uridine 5-carboxymethylaminomethyl modification enzyme MnmG.